Reading from the N-terminus, the 888-residue chain is Lon protease homolog 2, peroxisomal (888 aa).

Residues 11-255 (LAILPFRNKV…KATELVDRHL (245 aa)) enclose the Lon N-terminal domain. 408–415 (GPPGVGKT) provides a ligand contact to ATP. Positions 692–877 (VASAGVSVGL…EDVLENAFEG (186 aa)) constitute a Lon proteolytic domain. Residues Ser-783 and Lys-826 contribute to the active site. The Microbody targeting signal signature appears at 886-888 (SKL).

Belongs to the peptidase S16 family.

It localises to the peroxisome matrix. The enzyme catalyses Hydrolysis of proteins in presence of ATP.. Its function is as follows. ATP-dependent serine protease that mediates the selective degradation of misfolded and unassembled polypeptides in the peroxisomal matrix. Necessary for type 2 peroxisome targeting signal (PTS2)-containing protein processing and facilitates peroxisome matrix protein import. The protein is Lon protease homolog 2, peroxisomal (LON2) of Arabidopsis thaliana (Mouse-ear cress).